The following is a 180-amino-acid chain: Phosphoribosylaminoimidazole carboxylase (180 aa).

Substrate-binding residues include S35, D38, S62, K65, G89, and S91.

It belongs to the AIR carboxylase family. Class II subfamily.

It carries out the reaction 5-amino-1-(5-phospho-D-ribosyl)imidazole-4-carboxylate + H(+) = 5-amino-1-(5-phospho-beta-D-ribosyl)imidazole + CO2. It participates in purine metabolism; IMP biosynthesis via de novo pathway; 5-amino-1-(5-phospho-D-ribosyl)imidazole-4-carboxylate from 5-amino-1-(5-phospho-D-ribosyl)imidazole (carboxylase route): step 1/1. Its function is as follows. Catalyzes the reversible conversion of 5-aminoimidazole ribonucleotide (AIR) and CO(2) to 4-carboxy-5-aminoimidazole ribonucleotide (CAIR). This chain is Phosphoribosylaminoimidazole carboxylase, found in Archaeoglobus fulgidus (strain ATCC 49558 / DSM 4304 / JCM 9628 / NBRC 100126 / VC-16).